The sequence spans 225 residues: NAD(P)H-quinone oxidoreductase subunit K, chloroplastic (225 aa).

Residues Cys-43, Cys-44, Cys-108, and Cys-139 each coordinate [4Fe-4S] cluster.

Belongs to the complex I 20 kDa subunit family. NDH is composed of at least 16 different subunits, 5 of which are encoded in the nucleus. [4Fe-4S] cluster serves as cofactor.

Its subcellular location is the plastid. It localises to the chloroplast thylakoid membrane. It carries out the reaction a plastoquinone + NADH + (n+1) H(+)(in) = a plastoquinol + NAD(+) + n H(+)(out). The catalysed reaction is a plastoquinone + NADPH + (n+1) H(+)(in) = a plastoquinol + NADP(+) + n H(+)(out). Its function is as follows. NDH shuttles electrons from NAD(P)H:plastoquinone, via FMN and iron-sulfur (Fe-S) centers, to quinones in the photosynthetic chain and possibly in a chloroplast respiratory chain. The immediate electron acceptor for the enzyme in this species is believed to be plastoquinone. Couples the redox reaction to proton translocation, and thus conserves the redox energy in a proton gradient. The sequence is that of NAD(P)H-quinone oxidoreductase subunit K, chloroplastic from Nasturtium officinale (Watercress).